Reading from the N-terminus, the 838-residue chain is Protein translocase subunit SecA (838 aa).

ATP-binding positions include glutamine 85, 103–107 (GEGKT), and aspartate 493. Zn(2+)-binding residues include cysteine 823, cysteine 825, cysteine 834, and histidine 835.

The protein belongs to the SecA family. As to quaternary structure, monomer and homodimer. Part of the essential Sec protein translocation apparatus which comprises SecA, SecYEG and auxiliary proteins SecDF. Other proteins may also be involved. It depends on Zn(2+) as a cofactor.

The protein localises to the cell membrane. It localises to the cytoplasm. The catalysed reaction is ATP + H2O + cellular proteinSide 1 = ADP + phosphate + cellular proteinSide 2.. Functionally, part of the Sec protein translocase complex. Interacts with the SecYEG preprotein conducting channel. Has a central role in coupling the hydrolysis of ATP to the transfer of proteins into and across the cell membrane, serving as an ATP-driven molecular motor driving the stepwise translocation of polypeptide chains across the membrane. The polypeptide is Protein translocase subunit SecA (Streptococcus gordonii (strain Challis / ATCC 35105 / BCRC 15272 / CH1 / DL1 / V288)).